The chain runs to 275 residues: Sulfate transporter CysZ (275 aa).

Positions 1–24 are disordered; it reads MSSEKSSFPEKPPSFEKPSHSNTA. A compositionally biased stretch (basic and acidic residues) spans 13–24; it reads PSFEKPSHSNTA. Transmembrane regions (helical) follow at residues 49–69, 93–113, 169–189, and 232–252; these read FVILPLLMNIVLMGGAFWWLF, LIWPLAVLSILLVFSYLFSTI, IVLLLLYFIPGIGQTVAPVLW, and ALVSLFTLVPFLNLVIMPVAV.

The protein belongs to the CysZ family.

The protein localises to the cell inner membrane. In terms of biological role, high affinity, high specificity proton-dependent sulfate transporter, which mediates sulfate uptake. Provides the sulfur source for the cysteine synthesis pathway. In Pectobacterium atrosepticum (strain SCRI 1043 / ATCC BAA-672) (Erwinia carotovora subsp. atroseptica), this protein is Sulfate transporter CysZ.